Here is a 349-residue protein sequence, read N- to C-terminus: Probable myosin light chain kinase DDB_G0275057 (349 aa).

Positions 1–33 are disordered; sequence MGCFNSKEAGAGRPKTTTQQQQQATPEPTVTTA. The span at 16–33 shows a compositional bias: low complexity; that stretch reads TTTQQQQQATPEPTVTTA. The Protein kinase domain occupies 56–313; the sequence is YVVGKELGRG…AKQCLDDLWL (258 aa). ATP contacts are provided by residues 62 to 70 and lysine 85; that span reads LGRGAFSVV. The Proton acceptor role is filled by aspartate 178.

It belongs to the protein kinase superfamily. CAMK Ser/Thr protein kinase family. CaMK subfamily.

The enzyme catalyses L-seryl-[myosin light chain] + ATP = O-phospho-L-seryl-[myosin light chain] + ADP + H(+). The catalysed reaction is L-threonyl-[myosin light chain] + ATP = O-phospho-L-threonyl-[myosin light chain] + ADP + H(+). With respect to regulation, does not have a calmodulin-binding domain. In terms of biological role, may phosphorylate a specific serine in the N-terminus of a myosin light chain. The protein is Probable myosin light chain kinase DDB_G0275057 of Dictyostelium discoideum (Social amoeba).